The primary structure comprises 481 residues: Glutamine synthetase (481 aa).

Positions 22–106 (NEVEFVDFRF…VFCDVYDVYK (85 aa)) constitute a GS beta-grasp domain. In terms of domain architecture, GS catalytic spans 114-481 (PRSIAKKALQ…PFEFITTYSC (368 aa)). Mg(2+) contacts are provided by Glu139, Glu141, Glu223, and Glu230. L-glutamate-binding positions include 274-275 (NG) and Gly275. Mg(2+) is bound at residue His279. ATP-binding positions include 281-283 (HVS) and Ser283. 3 residues coordinate L-glutamate: Arg331, Glu337, and Arg349. 2 residues coordinate ATP: Arg349 and Arg354. Glu367 provides a ligand contact to Mg(2+). Residue Arg369 coordinates L-glutamate.

The protein belongs to the glutamine synthetase family. In terms of assembly, oligomer of 12 subunits arranged in the form of two hexameric ring. The cofactor is Mg(2+).

Its subcellular location is the cytoplasm. It catalyses the reaction L-glutamate + NH4(+) + ATP = L-glutamine + ADP + phosphate + H(+). With respect to regulation, the activity of this enzyme could be controlled by adenylation under conditions of abundant glutamine. Its function is as follows. Catalyzes the ATP-dependent biosynthesis of glutamine from glutamate and ammonia. The protein is Glutamine synthetase of Helicobacter pylori (strain ATCC 700392 / 26695) (Campylobacter pylori).